A 256-amino-acid chain; its full sequence is MEKEAIYKLIRESPPGEVNQVVHDIRDIGLSDEEAIHEQLKLYHEDYNSSVSISDDEKVIISADNRLEGNRYYDQVLQKSFTINYETMEAENVEDYTEAIKIPDEIVKQIKKVASDHYLSDVTFGIIKKSDEVESFTIVLVSSKYNPKNYWNGSWRCICNYNVSEKKLEGRSHIRVHYYEDGNVWLDASRPISATVEETSKLYEVLAQVENGIQQSFNVELSSLNDKKFKELRRQLPVTRQKINWENVSGIRMRNT.

Residue serine 31 is modified to Phosphoserine.

It belongs to the F-actin-capping protein alpha subunit family. Component of the F-actin capping complex, composed of a heterodimer of an alpha and a beta subunit.

It is found in the cytoplasm. The protein resides in the cytoskeleton. It localises to the actin patch. Functionally, F-actin-capping proteins bind in a Ca(2+)-independent manner to the fast growing ends of actin filaments (barbed end) thereby blocking the exchange of subunits at these ends. Unlike other capping proteins (such as gelsolin and severin), these proteins do not sever actin filaments. Competes with formin cdc12 for attachment to the actin filaments barbed ends. Slowly replaces cdc12 on the barbed ends in preparation for filament disassembly during contractile ring constriction. The chain is F-actin-capping protein subunit alpha (acp1) from Schizosaccharomyces pombe (strain 972 / ATCC 24843) (Fission yeast).